Consider the following 352-residue polypeptide: Palmitoyltransferase PFA5 (352 aa).

2 helical membrane passes run 12–32 and 53–73; these read YWTIYIVPLVVLLLMIYGTWA and IGLICTCCVLDALIIAIWVLI. One can recognise a DHHC domain in the interval 114–164; the sequence is VWCSNCQSLKVGRTKHSSHQGHCVPRFDHYCVWLGAVIGFKNYRLFVQFVF. Catalysis depends on cysteine 144, which acts as the S-palmitoyl cysteine intermediate. 2 consecutive transmembrane segments (helical) span residues 159 to 179 and 195 to 215; these read FVQFVFYFAVLLMIVWITISV and LIVLLIISGIGWLMTSGLFVS.

Belongs to the DHHC palmitoyltransferase family. PFA5 subfamily.

The protein localises to the membrane. The enzyme catalyses L-cysteinyl-[protein] + hexadecanoyl-CoA = S-hexadecanoyl-L-cysteinyl-[protein] + CoA. The chain is Palmitoyltransferase PFA5 (PFA5) from Candida glabrata (strain ATCC 2001 / BCRC 20586 / JCM 3761 / NBRC 0622 / NRRL Y-65 / CBS 138) (Yeast).